Reading from the N-terminus, the 274-residue chain is Aliphatic sulfonates import ATP-binding protein SsuB 2 (274 aa).

The ABC transporter domain occupies 21-235 (VQLRNVVRQF…DSGQAGFQLI (215 aa)). Position 53–60 (53–60 (GASGSGKT)) interacts with ATP.

It belongs to the ABC transporter superfamily. Aliphatic sulfonates importer (TC 3.A.1.17.2) family. As to quaternary structure, the complex is composed of two ATP-binding proteins (SsuB), two transmembrane proteins (SsuC) and a solute-binding protein (SsuA).

The protein resides in the cell inner membrane. The catalysed reaction is ATP + H2O + aliphatic sulfonate-[sulfonate-binding protein]Side 1 = ADP + phosphate + aliphatic sulfonateSide 2 + [sulfonate-binding protein]Side 1.. In terms of biological role, part of the ABC transporter complex SsuABC involved in aliphatic sulfonates import. Responsible for energy coupling to the transport system. This Pseudomonas syringae pv. syringae (strain B728a) protein is Aliphatic sulfonates import ATP-binding protein SsuB 2.